An 874-amino-acid chain; its full sequence is Alanine--tRNA ligase (874 aa).

Residues H561, H565, C663, and H667 each contribute to the Zn(2+) site.

It belongs to the class-II aminoacyl-tRNA synthetase family. The cofactor is Zn(2+).

It is found in the cytoplasm. It carries out the reaction tRNA(Ala) + L-alanine + ATP = L-alanyl-tRNA(Ala) + AMP + diphosphate. In terms of biological role, catalyzes the attachment of alanine to tRNA(Ala) in a two-step reaction: alanine is first activated by ATP to form Ala-AMP and then transferred to the acceptor end of tRNA(Ala). Also edits incorrectly charged Ser-tRNA(Ala) and Gly-tRNA(Ala) via its editing domain. The chain is Alanine--tRNA ligase from Trichodesmium erythraeum (strain IMS101).